We begin with the raw amino-acid sequence, 362 residues long: G-protein coupled receptor homolog US27 (362 aa).

At 1–34 the chain is on the virion surface side; the sequence is MTTSTNNQTLTQVSNMTNHTLNSTEIYQLFEYTR. 4 N-linked (GlcNAc...) asparagine; by host glycosylation sites follow: N7, N15, N18, and N22. Residues 35-58 traverse the membrane as a helical segment; it reads LGVWLMCIVGTFLNVLVITTILYY. The Intravirion segment spans residues 59-67; that stretch reads RRKKKSPSD. A helical membrane pass occupies residues 68-90; it reads TYICNLAVADLLIVVGLPFFLEY. Topologically, residues 91–104 are virion surface; sequence AKHHPKLSREVVCS. The helical transmembrane segment at 105–126 threads the bilayer; sequence GLNACFYICLFAGVCFLINLSM. The Intravirion segment spans residues 127 to 148; the sequence is DRYCVIVWGVELNRVRNNKRAT. A helical membrane pass occupies residues 149–167; that stretch reads CWVVIFWILAVLMGMPHYL. At 168-193 the chain is on the virion surface side; that stretch reads MYSHTNNECVGEFANETSGWFPVFLN. A helical membrane pass occupies residues 194–213; it reads TKVNICGYLAPIALMAYTYN. Over 214–233 the chain is Intravirion; that stretch reads RMVRFIINYVGKWHMQTLHV. Residues 234–257 traverse the membrane as a helical segment; that stretch reads LLVVVVSFASFWFPFNLALFLESI. Residues 258 to 274 lie on the Virion surface side of the membrane; the sequence is RLLAGVYNDTLQNVIIF. The chain crosses the membrane as a helical span at residues 275–298; that stretch reads CLYVGQFLAYVRACLNPGIYILVG. Residues 299 to 362 lie on the Intravirion side of the membrane; it reads TQMRKDMWTT…MESGEEEFLL (64 aa). Residues 341 to 362 form a disordered region; the sequence is TKRTHYDRKNAPMESGEEEFLL.

The protein belongs to the G-protein coupled receptor 1 family. In terms of assembly, heterodimer with US28. Interacts with host Gi alpha-1 subunit GNAI1; this interaction does not lead to the catalytic activation of Gi complex.

Its subcellular location is the virion. The protein localises to the host cell membrane. In terms of biological role, interacts with the host Gi complex without activating it, thereby probably interfering with the chemokine-Gi signaling. May also function as a G protein sink to sequester G protein from the cell surface via internalization. Plays an important role in spread of HCMV via the extracellular route. This is G-protein coupled receptor homolog US27 (US27) from Homo sapiens (Human).